Reading from the N-terminus, the 165-residue chain is PTS system glucose-specific EIIA component (165 aa).

The PTS EIIA type-1 domain occupies 33–137 (DPVFAGRMMG…STITPIVITN (105 aa)). Zn(2+) is bound by residues His-70 and His-85. His-85 serves as the catalytic Tele-phosphohistidine intermediate; for EIIA activity. At His-85 the chain carries Phosphohistidine; by HPr.

In terms of assembly, heterodimer with glycerol kinase (glpk). Requires Zn(2+) as cofactor.

It localises to the cytoplasm. Functionally, the phosphoenolpyruvate-dependent sugar phosphotransferase system (sugar PTS), a major carbohydrate active transport system, catalyzes the phosphorylation of incoming sugar substrates concomitantly with their translocation across the cell membrane. The enzyme II complex composed of PtsG and Crr is involved in glucose transport. The sequence is that of PTS system glucose-specific EIIA component (crr) from Bacillus cereus (strain ATCC 14579 / DSM 31 / CCUG 7414 / JCM 2152 / NBRC 15305 / NCIMB 9373 / NCTC 2599 / NRRL B-3711).